The following is a 53-amino-acid chain: Rubredoxin (53 aa).

Positions 1–53 (MQKFECTLCGYIYDPALVGPDTPDQDGAFEDVSENWVCPLCGAGKEDFEVYED) constitute a Rubredoxin-like domain. Fe cation is bound by residues Cys-6, Cys-9, Cys-38, and Cys-41.

This sequence belongs to the rubredoxin family. Fe(3+) serves as cofactor.

Rubredoxin is a small nonheme, iron protein lacking acid-labile sulfide. Its single Fe, chelated to 4 Cys, functions as an electron acceptor and may also stabilize the conformation of the molecule. The sequence is that of Rubredoxin from Peptoniphilus asaccharolyticus (Peptostreptococcus asaccharolyticus).